The primary structure comprises 204 residues: Copper-binding protein CutI (204 aa).

The first 26 residues, 1 to 26 (MLKKIALTLCPAIVGSLLFFTAPASA), serve as a signal peptide directing secretion. The Cu(2+) site is built by H27 and E50. At 27–178 (HVSVKPAESA…DDSENSGSSA (152 aa)) the chain is on the extracellular side. Residues 146–176 (PHSITNITSAKQVTDEHGATKTEDDSENSGS) are disordered. A compositionally biased stretch (polar residues) spans 147–157 (HSITNITSAKQ). Basic and acidic residues predominate over residues 158-168 (VTDEHGATKTE). The helical transmembrane segment at 179–199 (LDITAMVLSAAAIILSVAALV) threads the bilayer. At 200–204 (KKKRA) the chain is on the cytoplasmic side.

It is found in the cell membrane. Functionally, copper-binding protein that probably plays a role in copper homeostasis. May act as metallochaperone, possibly to facilitate copper uptake via the CutJ/YcnJ importer. Preferentially binds Cu in its oxidized Cu(II) state in a 1:1 stoichiometry. This chain is Copper-binding protein CutI, found in Bacillus subtilis (strain 168).